The primary structure comprises 929 residues: Urea transporter 2 (929 aa).

Positions 1–11 (MSDHPLKEMSD) are enriched in basic and acidic residues. The interval 1–89 (MSDHPLKEMS…KRRESELPRR (89 aa)) is disordered. Residues 31–42 (SELSSPTWPSSS) are compositionally biased toward low complexity. Basic and acidic residues predominate over residues 55–88 (PEEKDLRSSDEDSHIVKIEKPNERSKRRESELPR). Transmembrane regions (helical) follow at residues 133–155 (GAAQ…GLLI), 162–179 (IAGA…LALS), 184–204 (AIAS…VAVF), 212–232 (WWLL…SSAL), 241–261 (LPVF…ATGH), 310–330 (GGVI…HAAI), 349–371 (IYTG…MFYV), 378–399 (LLAL…NMMA), and 400–420 (VVGV…FLLL). Residues 451–480 (SDEQKPPNGGGGEQSHGGGQRKAEEGSETV) are disordered. Residues 458–470 (NGGGGEQSHGGGQ) are compositionally biased toward gly residues. Ser-486 carries the phosphoserine modification. Transmembrane regions (helical) follow at residues 609–629 (GILI…SGCL), 647–667 (AIAA…MAVF), 675–695 (WWLL…SSAL), and 704–724 (LPVF…ATGH). The N-linked (GlcNAc...) asparagine glycan is linked to Asn-742. A run of 4 helical transmembrane segments spans residues 773–793 (GGIF…HAAI), 812–832 (IYFG…GGMF), 841–861 (LLAI…ANML), and 863–883 (VFGL…FLLL).

Belongs to the urea transporter family. Interacts with SNAPIN which enhances its urea transport activity. Expressed in the inner medulla of the kidney. As to expression, expressed in both the inner and outer renal medulla of the kidney.

The protein localises to the apical cell membrane. It localises to the cell membrane. The catalysed reaction is urea(in) = urea(out). With respect to regulation, inhibited by phloretin. Activated by vasopressin, forskolin, 3-isobutyl-1-methylxanthine (IBMX) and cAMP. Inhibited by phloretin. Its activity is regulated as follows. Inhibited by urea analogs and phloretin and activated by forskolin. With respect to regulation, inhibited by phloretin and activated by forskolin. Mediates the transport of urea driven by a concentration gradient across the cell membrane of the kidney inner medullary collecting duct which is critical to the urinary concentrating mechanism. This chain is Urea transporter 2 (Slc14a2), found in Rattus norvegicus (Rat).